Reading from the N-terminus, the 399-residue chain is Dof zinc finger protein DOF5.1 (399 aa).

The segment at Leu-95 to Arg-149 adopts a Dof-type zinc-finger fold. Cys-97, Cys-100, Cys-122, and Cys-125 together coordinate Zn(2+). Residues Pro-139–Asp-176 form a disordered region.

Expressed ubiquitously, especially in the vascular tissues, except in seeds, petals and anthers. Specific to the vascular tissues in young leaves, cotyledons and flower buds. The PEAR proteins (e.g. DOF2.4, DOF5.1, DOF3.2, DOF1.1, DOF5.6 and DOF5.3) form a short-range concentration gradient that peaks at protophloem sieve elements (PSE).

Its subcellular location is the nucleus. Its function is as follows. Transcription factor that binds specifically to a 5'-AA[AG]G-3' consensus core sequence. Binds to 5'-TAAAGT-3' motif in REV promoter to triggers its transcription, thus regulating adaxial-abaxial polarity and influencing leaf axial patterning in an auxin transport- and response-dependent manner (e.g. IAA6 and IAA19 genes expression). Probably involved in early processes for vascular development. The PEAR proteins (e.g. DOF2.4, DOF5.1, DOF3.2, DOF1.1, DOF5.6 and DOF5.3) activate gene expression that promotes radial growth of protophloem sieve elements. This is Dof zinc finger protein DOF5.1 from Arabidopsis thaliana (Mouse-ear cress).